The primary structure comprises 145 residues: Cystin-1 (145 aa).

Residues 1–129 (MGSGSSRSGR…PEGQSAISYD (129 aa)) are disordered. Gly-2 carries the N-myristoyl glycine lipid modification. The Ciliary targeting motif motif lies at 29 to 33 (ASEGG). Position 116 is a phosphoserine (Ser-116).

Interacts (when myristoylated) with UNC119 and UNC119B; interaction is required for localization to cilium. As to expression, expressed primarily in the kidney and liver. Expressed at lower levels in the lung, brain and heart.

The protein resides in the cell projection. It is found in the cilium membrane. It localises to the cytoplasm. Its subcellular location is the cytoskeleton. The protein localises to the cilium axoneme. The chain is Cystin-1 (Cys1) from Mus musculus (Mouse).